Consider the following 510-residue polypeptide: NAD(P)H-quinone oxidoreductase subunit 2 A, chloroplastic (510 aa).

12 helical membrane-spanning segments follow: residues 31–51 (FIFP…IDLT), 59–79 (WFYF…LFRW), 99–119 (IFQF…VEYI), 124–144 (MAIT…MFLC), 149–169 (LITI…LSGY), 183–203 (YLLM…WLYG), 229–249 (ISIA…PAPF), 295–315 (WHLL…LLAI), 323–343 (MLAY…IVGD), 354–374 (YMLF…LFGL), 395–415 (ALSL…AGFF), and 418–438 (LYLF…IGLL).

It belongs to the complex I subunit 2 family. As to quaternary structure, NDH is composed of at least 16 different subunits, 5 of which are encoded in the nucleus.

It localises to the plastid. It is found in the chloroplast thylakoid membrane. It catalyses the reaction a plastoquinone + NADH + (n+1) H(+)(in) = a plastoquinol + NAD(+) + n H(+)(out). The enzyme catalyses a plastoquinone + NADPH + (n+1) H(+)(in) = a plastoquinol + NADP(+) + n H(+)(out). NDH shuttles electrons from NAD(P)H:plastoquinone, via FMN and iron-sulfur (Fe-S) centers, to quinones in the photosynthetic chain and possibly in a chloroplast respiratory chain. The immediate electron acceptor for the enzyme in this species is believed to be plastoquinone. Couples the redox reaction to proton translocation, and thus conserves the redox energy in a proton gradient. The sequence is that of NAD(P)H-quinone oxidoreductase subunit 2 A, chloroplastic from Oryza nivara (Indian wild rice).